Consider the following 354-residue polypeptide: MEIGVFIPIGNNGWLISEAAPQYMPSFALNKEIVQKAEKYGFDFALSMIKLRGFGGKTQFWEHNLESFTLMAGLAAVTDRIKIFATAATLTLPPAIVARMASTIDSIAPGRFGINLVTGWQKAEYDQMGLWPGEQHYTDRYNYLAEYATVLRELLETGVSDFKGKYFQMTDCRVSPHPKDTKLICAGSSNEGLAFTAQYADYSFALGKGTNTPTAFGGVNDRLKAAADKTGRDVASYILFMIIADETDEAAMAKWQAYRAGADQEALAWLTNQAAPNAAAGATTNTAQLAAPESAVNLNMGTLVGSYENVARMLDEVAAVEGTAGVLLVFDDFVAGVENFGTKIQPLMTSRAGV.

FMN-binding positions include 49–50 (IK), N115, E124, 140–141 (RY), and S189.

This sequence belongs to the NtaA/SnaA/DszA monooxygenase family. RutA subfamily.

It carries out the reaction uracil + FMNH2 + NADH + O2 = (Z)-3-ureidoacrylate + FMN + NAD(+) + H2O + H(+). The enzyme catalyses thymine + FMNH2 + NADH + O2 = (Z)-2-methylureidoacrylate + FMN + NAD(+) + H2O + H(+). Functionally, catalyzes the pyrimidine ring opening between N-3 and C-4 by an unusual flavin hydroperoxide-catalyzed mechanism, adding oxygen atoms in the process to yield ureidoacrylate peracid, that immediately reacts with FMN forming ureidoacrylate and FMN-N(5)-oxide. The FMN-N(5)-oxide reacts spontaneously with NADH to produce FMN. Requires the flavin reductase RutF to regenerate FMN in vivo. The sequence is that of Pyrimidine monooxygenase RutA from Caulobacter sp. (strain K31).